The primary structure comprises 229 residues: ATP synthase subunit a (229 aa).

Transmembrane regions (helical) follow at residues 16–36 (YAHVATLGIATVAAVGIGAAA), 81–101 (YIPFFASVFFFILFNNLLGMI), 110–130 (NMNTTFGFGVLMFLFYNFQGV), 142–162 (FMGPVIFLAPLMFVIEIVSHI), 175–195 (VMMGDHTVLSVFLDLVPIGVP), and 196–216 (IPFYVMGLFVCFVQAFVFTLL).

Belongs to the ATPase A chain family. As to quaternary structure, F-type ATPases have 2 components, CF(1) - the catalytic core - and CF(0) - the membrane proton channel. CF(1) has five subunits: alpha(3), beta(3), gamma(1), delta(1), epsilon(1). CF(0) has three main subunits: a(1), b(2) and c(9-12). The alpha and beta chains form an alternating ring which encloses part of the gamma chain. CF(1) is attached to CF(0) by a central stalk formed by the gamma and epsilon chains, while a peripheral stalk is formed by the delta and b chains.

The protein resides in the cell inner membrane. Its function is as follows. Key component of the proton channel; it plays a direct role in the translocation of protons across the membrane. This is ATP synthase subunit a from Bdellovibrio bacteriovorus (strain ATCC 15356 / DSM 50701 / NCIMB 9529 / HD100).